The sequence spans 448 residues: tRNA(Ile)-lysidine synthase (448 aa).

27-32 provides a ligand contact to ATP; that stretch reads SGGVDS.

Belongs to the tRNA(Ile)-lysidine synthase family.

It is found in the cytoplasm. The catalysed reaction is cytidine(34) in tRNA(Ile2) + L-lysine + ATP = lysidine(34) in tRNA(Ile2) + AMP + diphosphate + H(+). In terms of biological role, ligates lysine onto the cytidine present at position 34 of the AUA codon-specific tRNA(Ile) that contains the anticodon CAU, in an ATP-dependent manner. Cytidine is converted to lysidine, thus changing the amino acid specificity of the tRNA from methionine to isoleucine. The protein is tRNA(Ile)-lysidine synthase of Vibrio campbellii (strain ATCC BAA-1116).